Consider the following 871-residue polypeptide: MQKLGFPAMKSLDKPRSLSGSANMYSFSNRKPPDSVSSGSFSNLKLTAEKLVKDQAAMRTDLELANCKLKKSMEHVYALEEKLQNAFNENAKLRVRKKEDEKLWRGLESKFSSTKTLCDQLTETLQHLASQVQDAEKDKGFFETKFSTSSEAIDSLNQQMRDMSLRLDAAKEEITSRDKELEELKLEKQQKEMFYQTERCGTASLIEKKDAVITKLEASAAERKLNIENLNSQLEKVHLELTTKEDEVKDLVSIQEKLEKEKTSVQLSADNCFEKLVSSEQEVKKLDELVQYLVAELTELDKKNLTFKEKFDKLSGLYDTHIMLLQKDRDLALDRAQRSFDNLQGELFRVAATKEALESAGNELNEKIVELQNDKESLISQLSGLRCSTSQTIDKLESEAKGLVSKHADAESAISQLKEEMETLLESVKTSEDKKQELSLKLSSLEMESKEKCEKLQADAQRQVEELETLQKESESHQLQADLLAKEVNQLQTVIEEKGHVILQCNENEKQLNQQIIKDKELLATAETKLAEAKKQYDLMLESKQLELSRHLKELSQRNDQAINEIRRKYDVEKHEIINSEKDKVEKIIKDLSNKFDKELSDCKEESKRQLLTIQEEHSSLILSLREEHESKELNLKAKYDQELRQSQIQAENELKERITALKSEHDAQLKAFKCQYEDDCKKLQEELDLQRKKEERQRALVQLQWKVMSDNPPEEQEVNSNKNYSISKDSRLGGSKRSEHIRVRSDNDNVQDSPFVKAKETPVSKILKKAQNVNAGSVLSIPNPKHHSKVTHREYEVETNNGRVTKRRKTRNTTMFEEPQRRRTRATPKLTPQSIAKGTGMTSHARSANIGDLFSEGSLNPYADDPYAFD.

A disordered region spans residues Met-1–Ser-40. Positions Leu-18 to Ser-40 are enriched in polar residues. Coiled-coil stretches lie at residues Met-58 to Asn-304 and Leu-331 to Lys-608. 2 disordered regions span residues Val-708–His-741 and Ser-778–Asp-871. Residues Val-719–Ser-728 are compositionally biased toward polar residues. Basic and acidic residues predominate over residues Lys-729–His-741. A compositionally biased stretch (polar residues) spans Leu-831–Arg-847.

The protein localises to the nucleus. Required for chromosome synapsis and normal fidelity of crossing over. The sequence is that of Synaptonemal complex protein 1 (ZYP1A) from Arabidopsis thaliana (Mouse-ear cress).